Reading from the N-terminus, the 459-residue chain is Argininosuccinate lyase (459 aa).

This sequence belongs to the lyase 1 family. Argininosuccinate lyase subfamily.

It is found in the cytoplasm. The catalysed reaction is 2-(N(omega)-L-arginino)succinate = fumarate + L-arginine. Its pathway is amino-acid biosynthesis; L-arginine biosynthesis; L-arginine from L-ornithine and carbamoyl phosphate: step 3/3. The polypeptide is Argininosuccinate lyase (Prochlorococcus marinus (strain MIT 9301)).